The primary structure comprises 280 residues: Digeranylgeranylglyceryl phosphate synthase (280 aa).

The next 9 helical transmembrane spans lie at 4–24 (AAYLSIIRPVNAVVAGLAGIL), 27–47 (IIATGSIPAEFFWIFCIVLTI), 83–103 (LMYAILLFLIGNGIAILFTPL), 104–124 (PLAGIAMGNSVILWLYASFLK), 128–148 (LIGNISVSYLAASIFLFGGAI), 150–170 (GTQGIISVFPIAGATWGVMLA), 199–219 (ATIYLALISATAGVLMSLLLY), 222–242 (WGAFYLGAIILVDAIILFGAI), and 260–280 (KILKAGMFASLLVFLLSAVLL).

Belongs to the UbiA prenyltransferase family. DGGGP synthase subfamily. Mg(2+) serves as cofactor.

It localises to the cell membrane. The enzyme catalyses sn-3-O-(geranylgeranyl)glycerol 1-phosphate + (2E,6E,10E)-geranylgeranyl diphosphate = 2,3-bis-O-(geranylgeranyl)-sn-glycerol 1-phosphate + diphosphate. It functions in the pathway membrane lipid metabolism; glycerophospholipid metabolism. Functionally, prenyltransferase that catalyzes the transfer of the geranylgeranyl moiety of geranylgeranyl diphosphate (GGPP) to the C2 hydroxyl of (S)-3-O-geranylgeranylglyceryl phosphate (GGGP). This reaction is the second ether-bond-formation step in the biosynthesis of archaeal membrane lipids. The protein is Digeranylgeranylglyceryl phosphate synthase of Methanospirillum hungatei JF-1 (strain ATCC 27890 / DSM 864 / NBRC 100397 / JF-1).